A 277-amino-acid polypeptide reads, in one-letter code: Large ribosomal subunit protein uL2 (277 aa).

A disordered region spans residues 222-277 (GVAMNPIDHPHGGGEGRTSGGRHPVTPWGKPTKGKKTRTNKSTDKFILLSRHKRKK).

The protein belongs to the universal ribosomal protein uL2 family. Part of the 50S ribosomal subunit. Forms a bridge to the 30S subunit in the 70S ribosome.

In terms of biological role, one of the primary rRNA binding proteins. Required for association of the 30S and 50S subunits to form the 70S ribosome, for tRNA binding and peptide bond formation. It has been suggested to have peptidyltransferase activity; this is somewhat controversial. Makes several contacts with the 16S rRNA in the 70S ribosome. The chain is Large ribosomal subunit protein uL2 from Bradyrhizobium sp. (strain ORS 278).